The primary structure comprises 715 residues: Eosinophil peroxidase (715 aa).

The signal sequence occupies residues 1–17 (MHLLPALAGVLATLVLA). The propeptide occupies 18–139 (QPCEGTDPAS…SGCALRDQAE (122 aa)). N-linked (GlcNAc...) asparagine glycosylation is found at asparagine 52 and asparagine 113. Cysteine 141 and cysteine 152 form a disulfide bridge. Aspartate 232 contributes to the heme b binding site. The active-site Proton acceptor is histidine 233. Aspartate 234 is a Ca(2+) binding site. 2 disulfide bridges follow: cysteine 253-cysteine 263 and cysteine 257-cysteine 281. The Ca(2+) site is built by threonine 306, phenylalanine 308, aspartate 310, and serine 312. Residues asparagine 327 and asparagine 363 are each glycosylated (N-linked (GlcNAc...) asparagine). A disulfide bridge links cysteine 359 with cysteine 370. Residues glutamate 380 and histidine 474 each coordinate heme b. Tyrosine 488 is modified (3'-nitrotyrosine). 2 disulfides stabilise this stretch: cysteine 578–cysteine 635 and cysteine 676–cysteine 701. Residues asparagine 700 and asparagine 708 are each glycosylated (N-linked (GlcNAc...) asparagine).

This sequence belongs to the peroxidase family. XPO subfamily. As to quaternary structure, tetramer of two light chains and two heavy chains. The cofactor is Ca(2+). Requires heme b as cofactor.

The protein resides in the cytoplasmic granule. The enzyme catalyses 2 a phenolic donor + H2O2 = 2 a phenolic radical donor + 2 H2O. Its function is as follows. Mediates tyrosine nitration of secondary granule proteins in mature resting eosinophils. Shows significant inhibitory activity towards Mycobacterium tuberculosis H37Rv by inducing bacterial fragmentation and lysis. This is Eosinophil peroxidase (EPX) from Homo sapiens (Human).